A 519-amino-acid chain; its full sequence is Putative lipase ATG15 (519 aa).

At 1–5 (MYIPG) the chain is on the cytoplasmic side. The chain crosses the membrane as a helical; Signal-anchor for type II membrane protein span at residues 6 to 26 (PLRLSSYLLPFLSSPSPPAQS). Over 27-519 (SPDTRTISFK…CYKWEFGEWN (493 aa)) the chain is Lumenal. Residues asparagine 48, asparagine 133, asparagine 196, asparagine 220, asparagine 302, and asparagine 309 are each glycosylated (N-linked (GlcNAc...) asparagine). Catalysis depends on serine 318, which acts as the Charge relay system. N-linked (GlcNAc...) asparagine glycosylation occurs at asparagine 361. The interval 481–502 (RRGPKRQPGGEDPKHGGVPKPV) is disordered.

The protein belongs to the AB hydrolase superfamily. Lipase family. In terms of assembly, binds to both phosphatidylinositol (PI) and phosphatidylinositol 3,5-bisphosphate (PIP2).

It localises to the endosome. The protein localises to the multivesicular body membrane. It is found in the prevacuolar compartment membrane. It catalyses the reaction a triacylglycerol + H2O = a diacylglycerol + a fatty acid + H(+). In terms of biological role, lipase which is essential for lysis of subvacuolar cytoplasm to vacuole targeted bodies and intravacuolar autophagic bodies. Involved in the lysis of intravacuolar multivesicular body (MVB) vesicles. The intravacuolar membrane disintegration by ATG15 is critical to life span extension. The sequence is that of Putative lipase ATG15 (ATG15) from Cryptococcus neoformans var. neoformans serotype D (strain B-3501A) (Filobasidiella neoformans).